The sequence spans 92 residues: Nodulation protein F (92 aa).

A Carrier domain is found at 4–88 (QLTVEIIAAI…DVVEAVRGLI (85 aa)). Serine 45 is modified (O-(pantetheine 4'-phosphoryl)serine).

In terms of processing, 4'-phosphopantetheine is transferred from CoA to a specific serine of apo-NodF.

Its function is as follows. Proposed to synthesize nod factor fatty acyl chain. Involved in trans-2,trans-4,trans-6,cis-11-octadecatetraenoic acid biosynthesis. The polypeptide is Nodulation protein F (nodF) (Rhizobium leguminosarum bv. trifolii).